The following is a 189-amino-acid chain: Der GTPase-activating protein YihI (189 aa).

The tract at residues 1–81 is disordered; sequence MARKKKTRRV…ALAKKDPRLG (81 aa). Basic and acidic residues-rich tracts occupy residues 9 to 27 and 35 to 46; these read RVSD…ELPK and TRYELDAKARED. A compositionally biased stretch (polar residues) spans 60-71; sequence RHSATENNNNHQ.

This sequence belongs to the YihI family. Interacts with Der.

Its function is as follows. A GTPase-activating protein (GAP) that modifies Der/EngA GTPase function. May play a role in ribosome biogenesis. This is Der GTPase-activating protein YihI from Pasteurella multocida (strain Pm70).